The sequence spans 183 residues: Inner membrane-spanning protein YciB (183 aa).

The next 5 membrane-spanning stretches (helical) occupy residues 19-39 (LYGVQQAAITLVIATVIQLIV), 53-73 (IMGIFAVFFGILTAYFNDLNF), 76-96 (WKVTIINGLFAAVLLVSQFVF), 121-141 (LGWAGFFIICMLLNIVISYYF), and 151-171 (TFGFTGLSLIAAIATGVYLYP).

Belongs to the YciB family.

The protein localises to the cell inner membrane. Functionally, plays a role in cell envelope biogenesis, maintenance of cell envelope integrity and membrane homeostasis. This Actinobacillus pleuropneumoniae serotype 5b (strain L20) protein is Inner membrane-spanning protein YciB.